The following is a 211-amino-acid chain: MNASANLCAASDNDPQPGDQEAAHPVACAGDEPAAFLPHDLPIFLVGMMGAGKTTIGRGLARALRREFIDLDHELEARCGVRVPVIFEIEGEAGFRRREAAALQECTQRRQIILATGGGAVLAAENRQALRERGIVIYLRASVEELFRRTSRDRNRPLLATADPRATLRELMVAREPLYNEVADLVIDTGSMPIATLVKSLLPKLQAYEKK.

The interval 1–23 (MNASANLCAASDNDPQPGDQEAA) is disordered. 50–55 (GAGKTT) provides a ligand contact to ATP. Position 54 (threonine 54) interacts with Mg(2+). Residues aspartate 72, arginine 96, and glycine 118 each contribute to the substrate site. Position 156 (arginine 156) interacts with ATP. Residue arginine 175 coordinates substrate.

It belongs to the shikimate kinase family. In terms of assembly, monomer. Mg(2+) is required as a cofactor.

It localises to the cytoplasm. The enzyme catalyses shikimate + ATP = 3-phosphoshikimate + ADP + H(+). It functions in the pathway metabolic intermediate biosynthesis; chorismate biosynthesis; chorismate from D-erythrose 4-phosphate and phosphoenolpyruvate: step 5/7. Catalyzes the specific phosphorylation of the 3-hydroxyl group of shikimic acid using ATP as a cosubstrate. The protein is Shikimate kinase of Bordetella bronchiseptica (strain ATCC BAA-588 / NCTC 13252 / RB50) (Alcaligenes bronchisepticus).